The chain runs to 137 residues: MIKKYEVMYILDQDLKDTKELVAKLDGILSEGGQILESNDLGLLDFTYEINHKKKGFYHIVIVQATTQAIKEFERIAKIDKNVVRTLVLNTQNIQNYEQSVVLSKTDMTKFEEEQREKKNFRKPFIKREEAATKENK.

The disordered stretch occupies residues 113 to 137; it reads EEQREKKNFRKPFIKREEAATKENK. Positions 126–137 are enriched in basic and acidic residues; the sequence is IKREEAATKENK.

Belongs to the bacterial ribosomal protein bS6 family.

In terms of biological role, binds together with bS18 to 16S ribosomal RNA. This Mycoplasma capricolum subsp. capricolum (strain California kid / ATCC 27343 / NCTC 10154) protein is Small ribosomal subunit protein bS6.